Consider the following 209-residue polypeptide: Neurotrophin-4 (209 aa).

The first 21 residues, 1 to 21, serve as a signal peptide directing secretion; it reads MLPRHSCSLLLFLFLLPSVPM. The propeptide occupies 22 to 79; the sequence is EPHPPSSTLPPFLAPEWDLLSPRVALSRGAPAGPPLLFLLEAGAYGEPAGAPANRSRR. N-linked (GlcNAc...) asparagine glycosylation occurs at Asn-75. 3 cysteine pairs are disulfide-bonded: Cys-96-Cys-169, Cys-140-Cys-198, and Cys-157-Cys-200.

Belongs to the NGF-beta family.

Its subcellular location is the secreted. In terms of biological role, target-derived survival factor for peripheral sensory sympathetic neurons. May promote ameloblast differentiation and subsequent reduction in proliferation of ameloblasts. This Mus musculus (Mouse) protein is Neurotrophin-4 (Ntf4).